The following is a 248-amino-acid chain: Anamorsin homolog (248 aa).

The N-terminal SAM-like domain stretch occupies residues 4–129; the sequence is FKGLQKSLYI…ETGSSARLSF (126 aa). Positions 130–161 are linker; that stretch reads AKKNASAVNVWKISGDDEELIDEEELLDEEDK. Positions 172, 181, 184, and 186 each coordinate [2Fe-2S] cluster. Positions 172 to 186 are fe-S binding site A; that stretch reads CSTTGKRKACKNCSC. Residues Cys209, Cys212, Cys220, and Cys223 each coordinate [4Fe-4S] cluster. 2 consecutive short sequence motifs (cx2C motif) follow at residues 209–212 and 220–223; these read CGNC and CSTC. Residues 209–223 are fe-S binding site B; sequence CGNCYLGDAFRCSTC.

Belongs to the anamorsin family. Monomer. The cofactor is [2Fe-2S] cluster. [4Fe-4S] cluster serves as cofactor.

It is found in the cytoplasm. The protein localises to the mitochondrion intermembrane space. In terms of biological role, component of the cytosolic iron-sulfur (Fe-S) protein assembly (CIA) machinery. Required for the maturation of extramitochondrial Fe-S proteins. Part of an electron transfer chain functioning in an early step of cytosolic Fe-S biogenesis, facilitating the de novo assembly of a [4Fe-4S] cluster on the cytosolic Fe-S scaffold complex. Electrons are transferred from NADPH via a FAD- and FMN-containing diflavin oxidoreductase. Together with the diflavin oxidoreductase, also required for the assembly of the diferric tyrosyl radical cofactor of ribonucleotide reductase (RNR), probably by providing electrons for reduction during radical cofactor maturation in the catalytic small subunit. This is Anamorsin homolog from Drosophila yakuba (Fruit fly).